A 365-amino-acid polypeptide reads, in one-letter code: MNVIYPLAVPKGRRLCCEVCEAPAERVCAACTVTYYCGVVHQKADWDSIHEKICQLLIPLRTSMPFYNSEEERQHGLQQLQQRQKYLIEFCYTIAQKYLFEGKHEDAVPAALQSLRFRVKLYGLSSVELVPAYLLLAEASLGLGRIVQAEEYLFQAQWTVLKSTDCSNATHSLLHRNLGLLYIAKKNYEEARYHLANDIYFASCAFGTEDIRTSGGYFHLANIFYDLKKLDLADTLYTKVSEIWHAYLNNHYQVLSQAHIQQMDLLGKLFENDTGLDEAQEAEAIRILTSILNIRESTSDKAPQKTIFVLKILVMFYYLMMNSSKAQEYGMRALSLAKEQQLDVHEQSTIQELLSLISTEDHPIT.

Zn(2+)-binding residues include Cys17, Cys20, Cys28, Cys31, Cys37, His41, His50, and Cys54. The segment at 17-54 (CEVCEAPAERVCAACTVTYYCGVVHQKADWDSIHEKIC) adopts an MYND-type; atypical zinc-finger fold. TPR repeat units lie at residues 172–205 (SLLHRNLGLLYIAKKNYEEARYHLANDIYFASCA) and 214–247 (SGGYFHLANIFYDLKKLDLADTLYTKVSEIWHAY).

In terms of tissue distribution, expressed predominantly in the testis.

It is found in the cell projection. Its subcellular location is the cilium. It localises to the flagellum. Required for sperm flagellum function and male fertility. In Homo sapiens (Human), this protein is Zinc finger MYND domain-containing protein 12 (ZMYND12).